The chain runs to 159 residues: Small ribosomal subunit protein uS9 (159 aa).

The protein belongs to the universal ribosomal protein uS9 family.

The protein is Small ribosomal subunit protein uS9 of Rickettsia rickettsii (strain Iowa).